A 63-amino-acid chain; its full sequence is MPQTFFVFCFLFFVFLQLFPGTGEIAVCETCRLGRGKCRRACIESEKIVGWCKLNFFCCRERI.

An N-terminal signal peptide occupies residues 1 to 23 (MPQTFFVFCFLFFVFLQLFPGTG). 3 cysteine pairs are disulfide-bonded: C31–C58, C38–C52, and C42–C59.

Belongs to the beta-defensin family. Expressed in testis, epididymis (caput, corpus and cauda), kidney and neonatal and adult brain.

The protein localises to the secreted. Functionally, has antibacterial activity. The polypeptide is Beta-defensin 35 (Defb35) (Mus musculus (Mouse)).